The sequence spans 470 residues: Iron-sulfur cluster assembly protein SufB (470 aa).

This sequence belongs to the iron-sulfur cluster assembly SufBD family. Component of a complex composed of SufB, SufC and SufD in a stoichiometric ratio of 1:2:1. Interacts with SufC. Interacts with SufD.

Its pathway is cofactor biosynthesis; iron-sulfur cluster biosynthesis. Participates in the sulfur mobilization (SUF) pathway for iron-sulfur (Fe-S) cluster biogenesis. As part of a complex consisting of SufB-SufC(2)-SufD, involved in assembly of [4Fe-4S] clusters. Exhibits ATPase activity. The protein is Iron-sulfur cluster assembly protein SufB of Plasmodium falciparum (isolate 3D7).